The chain runs to 168 residues: Urease accessory protein UreE (168 aa).

Residues P137–H168 form a disordered region. Over residues G151–D161 the composition is skewed to basic residues.

It belongs to the UreE family.

The protein localises to the cytoplasm. Its function is as follows. Involved in urease metallocenter assembly. Binds nickel. Probably functions as a nickel donor during metallocenter assembly. This is Urease accessory protein UreE from Saccharophagus degradans (strain 2-40 / ATCC 43961 / DSM 17024).